Reading from the N-terminus, the 386-residue chain is Succinate--CoA ligase [ADP-forming] subunit beta (386 aa).

Residues 9 to 244 (KELLKQFGVP…LDEEDPAEIE (236 aa)) form the ATP-grasp domain. ATP-binding positions include K46, 53 to 55 (GRG), E99, A102, and E107. Mg(2+)-binding residues include N199 and D213. Residues N264 and 321–323 (GIM) contribute to the substrate site.

The protein belongs to the succinate/malate CoA ligase beta subunit family. Heterotetramer of two alpha and two beta subunits. The cofactor is Mg(2+).

It carries out the reaction succinate + ATP + CoA = succinyl-CoA + ADP + phosphate. The enzyme catalyses GTP + succinate + CoA = succinyl-CoA + GDP + phosphate. Its pathway is carbohydrate metabolism; tricarboxylic acid cycle; succinate from succinyl-CoA (ligase route): step 1/1. Its function is as follows. Succinyl-CoA synthetase functions in the citric acid cycle (TCA), coupling the hydrolysis of succinyl-CoA to the synthesis of either ATP or GTP and thus represents the only step of substrate-level phosphorylation in the TCA. The beta subunit provides nucleotide specificity of the enzyme and binds the substrate succinate, while the binding sites for coenzyme A and phosphate are found in the alpha subunit. The polypeptide is Succinate--CoA ligase [ADP-forming] subunit beta (Bordetella petrii (strain ATCC BAA-461 / DSM 12804 / CCUG 43448)).